The sequence spans 671 residues: UvrABC system protein B (671 aa).

The Helicase ATP-binding domain occupies 26-414 (EGLENGLAHQ…GGDIIEQVVR (389 aa)). Residue 39–46 (GVTGSGKT) participates in ATP binding. The Beta-hairpin motif lies at 92–115 (YYDYYQPEAYVPSSDTFIEKDASV). The Helicase C-terminal domain maps to 431–593 (QVDDLLSEIR…IIPQGLNKKI (163 aa)). In terms of domain architecture, UVR spans 631–666 (DQKIRELEAKMYTYAQNLEFEQAAELRDQVHQLRQQ).

Belongs to the UvrB family. Forms a heterotetramer with UvrA during the search for lesions. Interacts with UvrC in an incision complex.

The protein localises to the cytoplasm. The UvrABC repair system catalyzes the recognition and processing of DNA lesions. A damage recognition complex composed of 2 UvrA and 2 UvrB subunits scans DNA for abnormalities. Upon binding of the UvrA(2)B(2) complex to a putative damaged site, the DNA wraps around one UvrB monomer. DNA wrap is dependent on ATP binding by UvrB and probably causes local melting of the DNA helix, facilitating insertion of UvrB beta-hairpin between the DNA strands. Then UvrB probes one DNA strand for the presence of a lesion. If a lesion is found the UvrA subunits dissociate and the UvrB-DNA preincision complex is formed. This complex is subsequently bound by UvrC and the second UvrB is released. If no lesion is found, the DNA wraps around the other UvrB subunit that will check the other stand for damage. This chain is UvrABC system protein B, found in Yersinia pestis.